Consider the following 152-residue polypeptide: Deoxyuridine 5'-triphosphate nucleotidohydrolase (152 aa).

Residues 72 to 74 (RSG), Asn-85, 89 to 91 (TID), and Lys-99 each bind substrate.

Belongs to the dUTPase family. Requires Mg(2+) as cofactor.

It catalyses the reaction dUTP + H2O = dUMP + diphosphate + H(+). It participates in pyrimidine metabolism; dUMP biosynthesis; dUMP from dCTP (dUTP route): step 2/2. This enzyme is involved in nucleotide metabolism: it produces dUMP, the immediate precursor of thymidine nucleotides and it decreases the intracellular concentration of dUTP so that uracil cannot be incorporated into DNA. The polypeptide is Deoxyuridine 5'-triphosphate nucleotidohydrolase (Bradyrhizobium diazoefficiens (strain JCM 10833 / BCRC 13528 / IAM 13628 / NBRC 14792 / USDA 110)).